The primary structure comprises 808 residues: Spindle assembly abnormal protein 4 (808 aa).

The interval 1-151 is disordered; sequence MASDENIGAD…PDEPSTLVNS (151 aa). A compositionally biased stretch (low complexity) spans 42–54; that stretch reads PPTSELSSASSPS. 2 stretches are compositionally biased toward polar residues: residues 61 to 78 and 85 to 104; these read SLSN…SGIS and PPTT…SPEN. Residues 113 to 123 are compositionally biased toward basic and acidic residues; the sequence is AEEHGHSGQHA. Acidic residues predominate over residues 124–133; sequence EEEEDNDTDE. Residues 161–181 are a coiled coil; sequence KYKNAAAEFKAFERRMDSMRS. 2 disordered regions span residues 187–206 and 271–298; these read TSLA…PPTR and VTAP…DENR. A compositionally biased stretch (polar residues) spans 280–294; sequence MMNSSRQNPQNGNVQ. The stretch at 314–503 forms a coiled coil; that stretch reads LDRQKLEIEI…ERDDKEKEMF (190 aa). Residues 511 to 529 show a composition bias toward polar residues; sequence KTSNPVPPVLNQSVPISIT. The disordered stretch occupies residues 511 to 564; that stretch reads KTSNPVPPVLNQSVPISITSNGPSRHPSSSSLTTFRKPSTSNRERGVSWADEPN. Over residues 530–541 the composition is skewed to low complexity; the sequence is SNGPSRHPSSSS. The span at 542 to 551 shows a compositional bias: polar residues; sequence LTTFRKPSTS.

As to quaternary structure, interacts with hyls-1; leading to hyls-1 localization into newly forming centrioles.

It localises to the cytoplasm. The protein resides in the cytoskeleton. It is found in the microtubule organizing center. The protein localises to the centrosome. In terms of biological role, required for centrosome duplication. Plays a central role in determining centrosome size. The polypeptide is Spindle assembly abnormal protein 4 (sas-4) (Caenorhabditis elegans).